A 211-amino-acid chain; its full sequence is Transcription factor bHLH150 (211 aa).

Residues 1–15 (MSSEQGNGSNPSTSP) show a composition bias toward polar residues. A disordered region spans residues 1–23 (MSSEQGNGSNPSTSPEVEGTKTI). Residues 135 to 184 (AIRGSGGSGRRRKLSAVGNRVRVLGGLVPGCRRTALPELLDETADYIAAL) form the bHLH domain.

In terms of assembly, homodimer. Interacts with PRE3 and ASK7. Phosphorylated by ASK7.

The protein resides in the nucleus. Its function is as follows. Atypical bHLH transcription factor probably unable to bind DNA. Negatively regulates brassinosteroid signaling. This chain is Transcription factor bHLH150 (BHLH150), found in Arabidopsis thaliana (Mouse-ear cress).